The primary structure comprises 323 residues: Acetyl-coenzyme A carboxylase carboxyl transferase subunit alpha 1 (323 aa).

The CoA carboxyltransferase C-terminal domain occupies 39-293 (RLSKKSQQLT…RRALGDSLRQ (255 aa)).

It belongs to the AccA family. As to quaternary structure, acetyl-CoA carboxylase is a heterohexamer composed of biotin carboxyl carrier protein (AccB), biotin carboxylase (AccC) and two subunits each of ACCase subunit alpha (AccA) and ACCase subunit beta (AccD).

The protein resides in the cytoplasm. The catalysed reaction is N(6)-carboxybiotinyl-L-lysyl-[protein] + acetyl-CoA = N(6)-biotinyl-L-lysyl-[protein] + malonyl-CoA. It participates in lipid metabolism; malonyl-CoA biosynthesis; malonyl-CoA from acetyl-CoA: step 1/1. Component of the acetyl coenzyme A carboxylase (ACC) complex. First, biotin carboxylase catalyzes the carboxylation of biotin on its carrier protein (BCCP) and then the CO(2) group is transferred by the carboxyltransferase to acetyl-CoA to form malonyl-CoA. Its function is as follows. Does not confer resistance to the endogenous polyketide antibiotic thailandamide, does not confer resistance to thailandamide when expressed in S.typhimurium. This Burkholderia thailandensis (strain ATCC 700388 / DSM 13276 / CCUG 48851 / CIP 106301 / E264) protein is Acetyl-coenzyme A carboxylase carboxyl transferase subunit alpha 1.